The sequence spans 282 residues: MEMO1 family protein Msed_2139 (282 aa).

It belongs to the MEMO1 family.

This chain is MEMO1 family protein Msed_2139, found in Metallosphaera sedula (strain ATCC 51363 / DSM 5348 / JCM 9185 / NBRC 15509 / TH2).